The primary structure comprises 387 residues: Probable inactive shikimate kinase like 2, chloroplastic (387 aa).

The N-terminal 71 residues, 1–71, are a transit peptide targeting the chloroplast; it reads MAAFASGLAI…FNSFSCNCLS (71 aa). The interval 368-387 is disordered; the sequence is NIKPPGWDPSSDTGPHPQFT.

It belongs to the shikimate kinase family.

It localises to the plastid. Its subcellular location is the chloroplast. This Arabidopsis thaliana (Mouse-ear cress) protein is Probable inactive shikimate kinase like 2, chloroplastic (SKL2).